A 1079-amino-acid polypeptide reads, in one-letter code: Integrator complex subunit 3 homolog (1079 aa).

Disordered regions lie at residues Glu-544–Pro-574, Tyr-925–Ala-949, and Ala-1010–Asp-1079. The segment covering Lys-938–Ala-949 has biased composition (low complexity). Residues Ser-1049, Ser-1050, Ser-1054, and Ser-1055 each carry the phosphoserine modification. Over residues His-1062–Lys-1073 the composition is skewed to basic residues.

The protein belongs to the Integrator subunit 3 family. Belongs to the multiprotein complex Integrator, at least composed of IntS1, IntS2, IntS3, IntS4, omd/IntS5, IntS6, defl/IntS7, IntS8, IntS9, IntS10, IntS11, IntS12, asun/IntS13, IntS14 and IntS15. The core complex associates with protein phosphatase 2A subunits mts/PP2A and Pp2A-29B, to form the Integrator-PP2A (INTAC) complex.

It is found in the nucleus. The protein resides in the cytoplasm. Functionally, component of the integrator complex, a multiprotein complex that terminates RNA polymerase II (Pol II) transcription in the promoter-proximal region of genes. The integrator complex provides a quality checkpoint during transcription elongation by driving premature transcription termination of transcripts that are unfavorably configured for transcriptional elongation: the complex terminates transcription by (1) catalyzing dephosphorylation of the C-terminal domain (CTD) of Pol II subunit Polr2A/Rbp1 and Spt5, and (2) degrading the exiting nascent RNA transcript via endonuclease activity. The integrator complex is also involved in the 3'-end processing of the U7 snRNA, and also the spliceosomal snRNAs U1, U2, U4 and U5. This chain is Integrator complex subunit 3 homolog (IntS3), found in Drosophila mojavensis (Fruit fly).